The primary structure comprises 389 residues: Large envelope protein (389 aa).

Met1 carries the post-translational modification N-acetylmethionine. The N-myristoyl glycine; by host moiety is linked to residue Gly2. Residues 2–108 are pre-S1; it reads GQNLSVTNPL…PPLRDTHPQA (107 aa). The segment at 2-163 is pre-S; it reads GQNLSVTNPL…FLKTGDPALN (162 aa). Over 2–170 the chain is Virion surface; in external conformation; sequence GQNLSVTNPL…ALNMESISSG (169 aa). At 2 to 242 the chain is on the intravirion; in internal conformation side; it reads GQNLSVTNPL…PGYRWMCLRR (241 aa). Residues 78–105 form a disordered region; that stretch reads PAVPPPASTNRQSGRRPTPISPPLRDTH. The segment at 109–163 is pre-S2; sequence MQWNSTVFHQALQDPRVRGLYFPAGGSSSGTVSPVPTTASPISSTFLKTGDPALN. Residues 171 to 191 form a helical membrane-spanning segment; the sequence is FLGPLLVLQAGFFLLTKILTI. Residues 192–242 are Intravirion; in external conformation-facing; sequence PQSLDSWWTSLNFLGGAPVCPGQNSQSLTSNHSPTSCPPICPGYRWMCLRR. Residues 243–263 traverse the membrane as a helical segment; sequence FIIFLFILLLCLIFLLVLLDY. At 264 to 337 the chain is on the virion surface side; the sequence is RGMLPVCPLL…WASVRFSWLN (74 aa). N-linked (GlcNAc...) asparagine; by host glycosylation occurs at Asn309. Residues 338–358 traverse the membrane as a helical segment; sequence LLVPFVQWFAGLSPTVWLSVI. Residues 359 to 364 lie on the Intravirion side of the membrane; sequence WMIWYW. A helical transmembrane segment spans residues 365–387; sequence GPSLYNILSPFIPLLPIFFCLWA. At 388–389 the chain is on the virion surface side; the sequence is YI.

This sequence belongs to the orthohepadnavirus major surface antigen family. In terms of assembly, in its internal form (Li-HBsAg), interacts with the capsid protein and with the isoform S. Interacts with host chaperone CANX. Associates with host chaperone CANX through its pre-S2 N glycan; this association may be essential for isoform M proper secretion. As to quaternary structure, interacts with isoform L. Interacts with the antigens of satellite virus HDV (HDVAgs); this interaction is required for encapsidation of HDV genomic RNA. In terms of processing, isoform M is N-terminally acetylated by host at a ratio of 90%, and N-glycosylated by host at the pre-S2 region. Myristoylated.

Its subcellular location is the virion membrane. The large envelope protein exists in two topological conformations, one which is termed 'external' or Le-HBsAg and the other 'internal' or Li-HBsAg. In its external conformation the protein attaches the virus to cell receptors and thereby initiating infection. This interaction determines the species specificity and liver tropism. This attachment induces virion internalization predominantly through caveolin-mediated endocytosis. The large envelope protein also assures fusion between virion membrane and endosomal membrane. In its internal conformation the protein plays a role in virion morphogenesis and mediates the contact with the nucleocapsid like a matrix protein. Its function is as follows. The middle envelope protein plays an important role in the budding of the virion. It is involved in the induction of budding in a nucleocapsid independent way. In this process the majority of envelope proteins bud to form subviral lipoprotein particles of 22 nm of diameter that do not contain a nucleocapsid. In Pongo pygmaeus (Bornean orangutan), this protein is Large envelope protein.